The sequence spans 735 residues: Protein argonaute (735 aa).

Residues 1 to 94 (MDLLSNLRRS…LVQMGTKQLD (94 aa)) are N-terminal domain. A linker L1 region spans residues 95-180 (CRNDAHRCAL…IDIHHRFYTP (86 aa)). The interval 181-284 (WTVHQWLEQY…SPSLTMEMLA (104 aa)) is PAZ domain. The segment at 285-369 (KVAEDSTVCD…SKTADIRNKG (85 aa)) is linker L2. The interval 370 to 498 (CAKIGETSFG…LLCKAGWQPI (129 aa)) is mid domain. The tract at residues 499–735 (QLESVDHPEV…NISRDKLIAV (237 aa)) is PIWI domain. Residues Asp516, Glu550, Asp584, and Asp709 contribute to the active site. Asp516 contacts Mn(2+). Positions 584, 709, and 735 each coordinate Mn(2+).

Belongs to the argonaute family. Long pAgo subfamily. In terms of assembly, copurifies with SSB proteins Synpcc7942_0079 and Synpcc7942_0301 as well as other proteins. The cofactor is Mn(2+).

Its function is as follows. A DNA-guided ssDNA endonuclease that might play a role in defense against invading mobile genetic elements. Uses short ssDNA sequences as guides (gDNA) to bind complementary target strands, resulting in cleavage of the target DNA (tDNA). The cleavage site is 10 nucleotides (nt) downstream of the target residue base-paired with the 5'-end of the gDNA. Both 5'-P and 5'-OH gDNAs confer activity; a 5'-OH guide cleaves between nt 10-11 and nt 11-12. Guide DNA mismatches in the seed (nt 2-9) can enhance activity, mismatches 1-5 nt after the cleavage site block activity. Has no appreciable activity with guide RNA or on target RNA. In situ binds to 5'-phosphorylated DNA 14-20 nt in length; small DNA maps over the chromosome and plasmid with some preference for the replication origin and the probable termination site. Also has weak guide-independent nuclease activity on DNA called 'chopping'. Overexpression of wild-type or catalytically inactive mutant has no visible effect during growth under continuous high light for up to a month. The protein is Protein argonaute of Synechococcus elongatus (strain ATCC 33912 / PCC 7942 / FACHB-805) (Anacystis nidulans R2).